The following is a 251-amino-acid chain: Malonyl-[acyl-carrier protein] O-methyltransferase (251 aa).

This sequence belongs to the methyltransferase superfamily.

The catalysed reaction is malonyl-[ACP] + S-adenosyl-L-methionine = malonyl-[ACP] methyl ester + S-adenosyl-L-homocysteine. It functions in the pathway cofactor biosynthesis; biotin biosynthesis. Its function is as follows. Converts the free carboxyl group of a malonyl-thioester to its methyl ester by transfer of a methyl group from S-adenosyl-L-methionine (SAM). It allows to synthesize pimeloyl-ACP via the fatty acid synthetic pathway. This chain is Malonyl-[acyl-carrier protein] O-methyltransferase, found in Salmonella typhimurium (strain LT2 / SGSC1412 / ATCC 700720).